A 490-amino-acid polypeptide reads, in one-letter code: Type I restriction enzyme EcoEI methylase subunit (490 aa).

S-adenosyl-L-methionine-binding positions include 163–168 (EFYTPR), 193–195 (TGG), and Glu-226.

The protein belongs to the N(4)/N(6)-methyltransferase family. In terms of assembly, the type I restriction/modification system is composed of three polypeptides R, M and S; the restriction enzyme has stoichiometry R(2)M(2)S(1) while the methyltransferase is M(2)S(1).

It catalyses the reaction a 2'-deoxyadenosine in DNA + S-adenosyl-L-methionine = an N(6)-methyl-2'-deoxyadenosine in DNA + S-adenosyl-L-homocysteine + H(+). The subtype gamma methyltransferase (M) subunit of a type I restriction enzyme. The M and S subunits together form a methyltransferase (MTase) that methylates two adenine residues of the sequence 5'-GAGN(7)ATGC-3'. In the presence of the R subunit the complex can also act as an endonuclease, binding to the same target sequence but cutting the DNA some distance from this site. Whether the DNA is cut or modified depends on the methylation state of the target sequence. When the target site is unmodified, the DNA is cut. When the target site is hemimethylated, the complex acts as a maintenance MTase modifying the DNA so that both strands become methylated. After locating a non-methylated recognition site, the enzyme complex serves as a molecular motor that translocates DNA in an ATP-dependent manner until a collision occurs that triggers cleavage. This chain is Type I restriction enzyme EcoEI methylase subunit (hsdM), found in Escherichia coli.